A 96-amino-acid polypeptide reads, in one-letter code: Large ribosomal subunit protein uL23 (96 aa).

The protein belongs to the universal ribosomal protein uL23 family. Part of the 50S ribosomal subunit. Contacts protein L29, and trigger factor when it is bound to the ribosome.

Functionally, one of the early assembly proteins it binds 23S rRNA. One of the proteins that surrounds the polypeptide exit tunnel on the outside of the ribosome. Forms the main docking site for trigger factor binding to the ribosome. This is Large ribosomal subunit protein uL23 from Enterococcus faecalis (strain ATCC 700802 / V583).